A 507-amino-acid polypeptide reads, in one-letter code: Cytochrome P450 monooxygenase cloA (507 aa).

Residues 15–35 (WTWILLTTCIALTSPLVLKGI) traverse the membrane as a helical segment. N-linked (GlcNAc...) asparagine glycosylation is present at N247. Residue C450 coordinates heme.

It belongs to the cytochrome P450 family. The cofactor is heme.

The protein resides in the membrane. It participates in alkaloid biosynthesis; ergot alkaloid biosynthesis. In terms of biological role, cytochrome P450 monooxygenase; part of the gene cluster that mediates the biosynthesis of fungal ergot alkaloid. DmaW catalyzes the first step of ergot alkaloid biosynthesis by condensing dimethylallyl diphosphate (DMAP) and tryptophan to form 4-dimethylallyl-L-tryptophan. The second step is catalyzed by the methyltransferase easF that methylates 4-dimethylallyl-L-tryptophan in the presence of S-adenosyl-L-methionine, resulting in the formation of 4-dimethylallyl-L-abrine. The catalase easC and the FAD-dependent oxidoreductase easE then transform 4-dimethylallyl-L-abrine to chanoclavine-I which is further oxidized by easD in the presence of NAD(+), resulting in the formation of chanoclavine-I aldehyde. Agroclavine dehydrogenase easG then mediates the conversion of chanoclavine-I aldehyde to agroclavine via a non-enzymatic adduct reaction: the substrate is an iminium intermediate that is formed spontaneously from chanoclavine-I aldehyde in the presence of glutathione. The presence of easA is not required to complete this reaction. Further conversion of agroclavine to paspalic acid is a two-step process involving oxidation of agroclavine to elymoclavine and of elymoclavine to paspalic acid, the second step being performed by the elymoclavine oxidase cloA. Paspalic acid is then further converted to D-lysergic acid. Ergopeptines are assembled from D-lysergic acid and three different amino acids by the D-lysergyl-peptide-synthetases composed each of a monomudular and a trimodular nonribosomal peptide synthetase subunit. LpsB and lpsC encode the monomodular subunits responsible for D-lysergic acid activation and incorporation into the ergopeptine backbone. LpsA1 and A2 subunits encode the trimodular nonribosomal peptide synthetase assembling the tripeptide portion of ergopeptines. LpsA1 is responsible for formation of the major ergopeptine, ergotamine, and lpsA2 for alpha-ergocryptine, the minor ergopeptine of the total alkaloid mixture elaborated by C.purpurea. D-lysergyl-tripeptides are assembled by the nonribosomal peptide synthetases and released as N-(D-lysergyl-aminoacyl)-lactams. Cyclolization of the D-lysergyl-tripeptides is performed by the Fe(2+)/2-ketoglutarate-dependent dioxygenase easH which introduces a hydroxyl group into N-(D-lysergyl-aminoacyl)-lactam at alpha-C of the aminoacyl residue followed by spontaneous condensation with the terminal lactam carbonyl group. The chain is Cytochrome P450 monooxygenase cloA from Claviceps purpurea (Ergot fungus).